The chain runs to 234 residues: Geranylgeranylglyceryl phosphate synthase (234 aa).

Residues Asp24 and Ser52 each contribute to the Mg(2+) site. Residues 172-178 (YLEAGSG), 203-204 (GG), and 225-226 (GT) each bind sn-glycerol 1-phosphate.

It belongs to the GGGP/HepGP synthase family. Group II subfamily. Homodimer. Mg(2+) is required as a cofactor.

The enzyme catalyses sn-glycerol 1-phosphate + (2E,6E,10E)-geranylgeranyl diphosphate = sn-3-O-(geranylgeranyl)glycerol 1-phosphate + diphosphate. Its function is as follows. Prenyltransferase that catalyzes the transfer of the geranylgeranyl moiety of geranylgeranyl diphosphate (GGPP) to the C3 hydroxyl of sn-glycerol-1-phosphate (G1P). The chain is Geranylgeranylglyceryl phosphate synthase from Zunongwangia profunda (strain DSM 18752 / CCTCC AB 206139 / SM-A87) (Wangia profunda).